Here is an 84-residue protein sequence, read N- to C-terminus: Polyketide-8 synthase acyl carrier protein 1 (84 aa).

A Carrier domain is found at 7–82 (AARKQEIKEI…GVYVVVSEAA (76 aa)). The residue at position 42 (Ser-42) is an O-(pantetheine 4'-phosphoryl)serine.

4'-phosphopantetheine is transferred from CoA to a specific serine of the apo-ACP-like protein.

Functionally, acyl carrier protein. The polypeptide is Polyketide-8 synthase acyl carrier protein 1 (Streptomyces avermitilis (strain ATCC 31267 / DSM 46492 / JCM 5070 / NBRC 14893 / NCIMB 12804 / NRRL 8165 / MA-4680)).